Consider the following 396-residue polypeptide: Ribosomal RNA large subunit methyltransferase I (396 aa).

Residues 2–79 form the PUA domain; it reads AIRIKLKPGR…REEEIDREFF (78 aa).

This sequence belongs to the methyltransferase superfamily. RlmI family.

Its subcellular location is the cytoplasm. It catalyses the reaction cytidine(1962) in 23S rRNA + S-adenosyl-L-methionine = 5-methylcytidine(1962) in 23S rRNA + S-adenosyl-L-homocysteine + H(+). In terms of biological role, specifically methylates the cytosine at position 1962 (m5C1962) of 23S rRNA. The protein is Ribosomal RNA large subunit methyltransferase I of Shewanella baltica (strain OS155 / ATCC BAA-1091).